The chain runs to 930 residues: Endoplasmic reticulum aminopeptidase 1 (930 aa).

Residues 1 to 2 lie on the Cytoplasmic side of the membrane; the sequence is MP. The chain crosses the membrane as a helical; Signal-anchor for type II membrane protein span at residues 3–23; sequence SLLSLVLTFLAVSSPSCCQNS. The Lumenal segment spans residues 24–930; that stretch reads DTASPKASNG…WLQKERQELL (907 aa). Residues asparagine 59 and asparagine 143 are each glycosylated (N-linked (GlcNAc...) asparagine). Substrate contacts are provided by residues glutamate 172 and 306–310; that span reads GAMEN. Residue histidine 342 coordinates Zn(2+). Catalysis depends on glutamate 343, which acts as the Proton acceptor. Residues histidine 346 and glutamate 365 each coordinate Zn(2+). A disulfide bridge connects residues cysteine 393 and cysteine 432. N-linked (GlcNAc...) asparagine glycosylation is found at asparagine 403 and asparagine 655. Cysteine 725 and cysteine 732 are joined by a disulfide. N-linked (GlcNAc...) asparagine glycosylation is found at asparagine 749 and asparagine 890.

It belongs to the peptidase M1 family. In terms of assembly, monomer. May also exist as a heterodimer; with ERAP2. Interacts with RBMX. Requires Zn(2+) as cofactor. N-glycosylated. Ubiquitous.

The protein localises to the endoplasmic reticulum membrane. Aminopeptidase that plays a central role in peptide trimming, a step required for the generation of most HLA class I-binding peptides. Peptide trimming is essential to customize longer precursor peptides to fit them to the correct length required for presentation on MHC class I molecules. Strongly prefers substrates 9-16 residues long. Rapidly degrades 13-mer to a 9-mer and then stops. Preferentially hydrolyzes the residue Leu and peptides with a hydrophobic C-terminus, while it has weak activity toward peptides with charged C-terminus. May play a role in the inactivation of peptide hormones. May be involved in the regulation of blood pressure through the inactivation of angiotensin II and/or the generation of bradykinin in the kidney. This chain is Endoplasmic reticulum aminopeptidase 1 (Erap1), found in Rattus norvegicus (Rat).